Here is a 418-residue protein sequence, read N- to C-terminus: Transcription termination factor Rho (418 aa).

The Rho RNA-BD domain maps to 48-123 (SIFGEGTLEV…VKVDKVNGEA (76 aa)). Residues 169 to 174 (GKGQRA), 181 to 186 (KSGKTV), and Arg212 contribute to the ATP site.

Belongs to the Rho family. In terms of assembly, homohexamer. The homohexamer assembles into an open ring structure.

Facilitates transcription termination by a mechanism that involves Rho binding to the nascent RNA, activation of Rho's RNA-dependent ATPase activity, and release of the mRNA from the DNA template. The sequence is that of Transcription termination factor Rho from Chromobacterium violaceum (strain ATCC 12472 / DSM 30191 / JCM 1249 / CCUG 213 / NBRC 12614 / NCIMB 9131 / NCTC 9757 / MK).